We begin with the raw amino-acid sequence, 311 residues long: Putative ABC transporter ATP-binding protein MG467 (311 aa).

Positions 84–310 (ITINKMWKNV…IVSNQLVRPL (227 aa)) constitute an ABC transporter domain. 122–129 (GSSGSGKT) is a binding site for ATP.

This sequence belongs to the ABC transporter superfamily.

The protein is Putative ABC transporter ATP-binding protein MG467 of Mycoplasma genitalium (strain ATCC 33530 / DSM 19775 / NCTC 10195 / G37) (Mycoplasmoides genitalium).